The sequence spans 97 residues: Large ribosomal subunit protein eL21 (97 aa).

The span at 1–24 shows a compositional bias: basic residues; sequence MVQKPHSFRRKTRKKLRKHPRRRG. Residues 1–25 are disordered; sequence MVQKPHSFRRKTRKKLRKHPRRRGL.

The protein belongs to the eukaryotic ribosomal protein eL21 family.

The sequence is that of Large ribosomal subunit protein eL21 (rpl21e) from Pyrococcus horikoshii (strain ATCC 700860 / DSM 12428 / JCM 9974 / NBRC 100139 / OT-3).